Reading from the N-terminus, the 476-residue chain is Adenosylhomocysteinase (476 aa).

3 residues coordinate substrate: T61, D140, and E200. 201 to 203 (TTT) contributes to the NAD(+) binding site. Substrate is bound by residues K230 and D234. NAD(+)-binding positions include N235, 264-269 (GYGDVG), E287, N322, 343-345 (IGH), and N389.

The protein belongs to the adenosylhomocysteinase family. Requires NAD(+) as cofactor.

It is found in the cytoplasm. The enzyme catalyses S-adenosyl-L-homocysteine + H2O = L-homocysteine + adenosine. It participates in amino-acid biosynthesis; L-homocysteine biosynthesis; L-homocysteine from S-adenosyl-L-homocysteine: step 1/1. May play a key role in the regulation of the intracellular concentration of adenosylhomocysteine. The chain is Adenosylhomocysteinase from Acidovorax ebreus (strain TPSY) (Diaphorobacter sp. (strain TPSY)).